Reading from the N-terminus, the 934-residue chain is Palmitoyltransferase ZDHHC8 (934 aa).

The Cytoplasmic segment spans residues 1–9; that stretch reads MPKCDVKTR. The chain crosses the membrane as a helical span at residues 10–30; that stretch reads YIPATFAWIVLLLTTFLFFFY. Topologically, residues 31 to 47 are extracellular; it reads PCQFYVKSHPWVLAYQG. Residues 48 to 68 traverse the membrane as a helical segment; sequence VITFFVLANFTLATFMDPGII. At 69 to 142 the chain is on the cytoplasmic side; sequence PKASPDEDCE…NNCIGRRNYR (74 aa). Positions 99–149 constitute a DHHC domain; sequence KWCVTCKFYRPPRCSHCSVCNHCIETFDHHCPWVNNCIGRRNYRFFFFFLV. C129 serves as the catalytic S-palmitoyl cysteine intermediate. The chain crosses the membrane as a helical span at residues 143–163; that stretch reads FFFFFLVSLSIHMLSIFSLCL. The Extracellular segment spans residues 164–177; it reads VYVLKIMPNIKDTA. The helical transmembrane segment at 178–198 threads the bilayer; it reads PIVAIILMGLVTILAIPIFGL. Over 199–934 the chain is Cytoplasmic; sequence TGFHMVLVSR…IYDMNYEISV (736 aa). Disordered regions lie at residues 336-440, 506-525, 669-705, 751-780, 835-862, and 881-934; these read NGYN…GYTS, MASP…RRPD, QRGV…SGIG, QQQQ…TMPQ, PNPM…TPTR, and LEQQ…EISV. Polar residues-rich tracts occupy residues 337–349 and 381–394; these read GYNQ…TLYS and RHNS…QVSD. Residues 397-411 show a composition bias toward gly residues; sequence GLNGSVSTGGGGGGD. A compositionally biased stretch (basic residues) spans 415–429; sequence HMRLYHPRHSPHARP. Low complexity-rich tracts occupy residues 688–705 and 751–765; these read QQQQ…SGIG and QQQQ…AAAA. Over residues 768–780 the composition is skewed to polar residues; sequence HRSNPTSPTTMPQ. Residues 910–919 are compositionally biased toward polar residues; that stretch reads MQSNASNSGT.

The protein belongs to the DHHC palmitoyltransferase family. ERF2/ZDHHC9 subfamily.

It is found in the golgi apparatus membrane. It localises to the cell membrane. It catalyses the reaction L-cysteinyl-[protein] + hexadecanoyl-CoA = S-hexadecanoyl-L-cysteinyl-[protein] + CoA. Palmitoyltransferase that catalyzes the addition of palmitate onto various protein substrates and therefore functions in several unrelated biological processes. Regulates tissue growth possibly by regulating Ras64B protein stability. May regulate CG34450 mRNA levels. The protein is Palmitoyltransferase ZDHHC8 of Drosophila melanogaster (Fruit fly).